Reading from the N-terminus, the 704-residue chain is Elongation factor G (704 aa).

In terms of domain architecture, tr-type G spans 10–290; sequence NKVRNIGIMA…AVVDFLPSPL (281 aa). Residues 19-26, 83-87, and 137-140 each bind GTP; these read AHIDAGKT, DTPGH, and NKMD. Positions 293-313 are disordered; that stretch reads PPMIGHDPRNEETEMTRKPST. The segment covering 298 to 313 has biased composition (basic and acidic residues); that stretch reads HDPRNEETEMTRKPST.

The protein belongs to the TRAFAC class translation factor GTPase superfamily. Classic translation factor GTPase family. EF-G/EF-2 subfamily.

The protein localises to the cytoplasm. In terms of biological role, catalyzes the GTP-dependent ribosomal translocation step during translation elongation. During this step, the ribosome changes from the pre-translocational (PRE) to the post-translocational (POST) state as the newly formed A-site-bound peptidyl-tRNA and P-site-bound deacylated tRNA move to the P and E sites, respectively. Catalyzes the coordinated movement of the two tRNA molecules, the mRNA and conformational changes in the ribosome. The chain is Elongation factor G from Renibacterium salmoninarum (strain ATCC 33209 / DSM 20767 / JCM 11484 / NBRC 15589 / NCIMB 2235).